A 141-amino-acid polypeptide reads, in one-letter code: Small ribosomal subunit protein uS12 (141 aa).

D102 carries the 3-methylthioaspartic acid modification. The disordered stretch occupies residues 115-141 (GDASGVEKRRQQRSLYGAKRPKKEASK).

Belongs to the universal ribosomal protein uS12 family. Part of the 30S ribosomal subunit. Contacts proteins S8 and S17. May interact with IF1 in the 30S initiation complex.

In terms of biological role, with S4 and S5 plays an important role in translational accuracy. Interacts with and stabilizes bases of the 16S rRNA that are involved in tRNA selection in the A site and with the mRNA backbone. Located at the interface of the 30S and 50S subunits, it traverses the body of the 30S subunit contacting proteins on the other side and probably holding the rRNA structure together. The combined cluster of proteins S8, S12 and S17 appears to hold together the shoulder and platform of the 30S subunit. The polypeptide is Small ribosomal subunit protein uS12 (Ureaplasma parvum serovar 3 (strain ATCC 27815 / 27 / NCTC 11736)).